The chain runs to 505 residues: Aspartyl/glutamyl-tRNA(Asn/Gln) amidotransferase subunit B (505 aa).

The protein belongs to the GatB/GatE family. GatB subfamily. In terms of assembly, heterotrimer of A, B and C subunits.

It catalyses the reaction L-glutamyl-tRNA(Gln) + L-glutamine + ATP + H2O = L-glutaminyl-tRNA(Gln) + L-glutamate + ADP + phosphate + H(+). It carries out the reaction L-aspartyl-tRNA(Asn) + L-glutamine + ATP + H2O = L-asparaginyl-tRNA(Asn) + L-glutamate + ADP + phosphate + 2 H(+). Its function is as follows. Allows the formation of correctly charged Asn-tRNA(Asn) or Gln-tRNA(Gln) through the transamidation of misacylated Asp-tRNA(Asn) or Glu-tRNA(Gln) in organisms which lack either or both of asparaginyl-tRNA or glutaminyl-tRNA synthetases. The reaction takes place in the presence of glutamine and ATP through an activated phospho-Asp-tRNA(Asn) or phospho-Glu-tRNA(Gln). The protein is Aspartyl/glutamyl-tRNA(Asn/Gln) amidotransferase subunit B of Haloarcula marismortui (strain ATCC 43049 / DSM 3752 / JCM 8966 / VKM B-1809) (Halobacterium marismortui).